The chain runs to 470 residues: Uronate isomerase (470 aa).

Belongs to the metallo-dependent hydrolases superfamily. Uronate isomerase family.

It catalyses the reaction D-glucuronate = D-fructuronate. It carries out the reaction aldehydo-D-galacturonate = keto-D-tagaturonate. It participates in carbohydrate metabolism; pentose and glucuronate interconversion. The protein is Uronate isomerase of Salmonella typhi.